Consider the following 166-residue polypeptide: Crossover junction endodeoxyribonuclease RuvC (166 aa).

Active-site residues include D7, E67, and D140. Mg(2+)-binding residues include D7, E67, and D140.

This sequence belongs to the RuvC family. As to quaternary structure, homodimer which binds Holliday junction (HJ) DNA. The HJ becomes 2-fold symmetrical on binding to RuvC with unstacked arms; it has a different conformation from HJ DNA in complex with RuvA. In the full resolvosome a probable DNA-RuvA(4)-RuvB(12)-RuvC(2) complex forms which resolves the HJ. Mg(2+) serves as cofactor.

Its subcellular location is the cytoplasm. The catalysed reaction is Endonucleolytic cleavage at a junction such as a reciprocal single-stranded crossover between two homologous DNA duplexes (Holliday junction).. The RuvA-RuvB-RuvC complex processes Holliday junction (HJ) DNA during genetic recombination and DNA repair. Endonuclease that resolves HJ intermediates. Cleaves cruciform DNA by making single-stranded nicks across the HJ at symmetrical positions within the homologous arms, yielding a 5'-phosphate and a 3'-hydroxyl group; requires a central core of homology in the junction. The consensus cleavage sequence is 5'-(A/T)TT(C/G)-3'. Cleavage occurs on the 3'-side of the TT dinucleotide at the point of strand exchange. HJ branch migration catalyzed by RuvA-RuvB allows RuvC to scan DNA until it finds its consensus sequence, where it cleaves and resolves the cruciform DNA. The sequence is that of Crossover junction endodeoxyribonuclease RuvC from Ruminiclostridium cellulolyticum (strain ATCC 35319 / DSM 5812 / JCM 6584 / H10) (Clostridium cellulolyticum).